Consider the following 253-residue polypeptide: DnaJ homolog subfamily C member 8 (253 aa).

Ala2 is subject to N-acetylalanine. The residue at position 35 (Ser35) is a Phosphoserine. The J domain maps to 57 to 124 (NPFEVLQIDP…QKKRALDVIQ (68 aa)). Lys146 carries the post-translational modification N6-acetyllysine. Residues 181–222 (EAKEMHERKRQREEEIEAQEKAKREREWQKNFEESRDGRVDS) show a composition bias toward basic and acidic residues. Residues 181–253 (EAKEMHERKR…PPKVKMEQRE (73 aa)) form a disordered region. 2 short sequence motifs (nuclear localization signal) span residues 189 to 192 (KRQR) and 203 to 206 (KRER). Residue Ser222 is modified to Phosphoserine. Basic residues predominate over residues 231 to 240 (KGKKEKKNRT). The essential for polyglutamine aggregation suppression stretch occupies residues 232–253 (GKKEKKNRTFLRPPKVKMEQRE).

In terms of assembly, interacts with SRPK1. Interacts with HSP70 (HSPA1A or HSPA1B).

The protein localises to the nucleus. Suppresses polyglutamine (polyQ) aggregation of ATXN3 in neuronal cells. This chain is DnaJ homolog subfamily C member 8 (Dnajc8), found in Mus musculus (Mouse).